The sequence spans 230 residues: Claudin-2 (230 aa).

Residues 1–7 (MASLGLQ) lie on the Cytoplasmic side of the membrane. The helical transmembrane segment at 8 to 28 (LVGYILGLLGLLGTLVAMLLP) threads the bilayer. Topologically, residues 29 to 81 (SWKTSSYVGASIVTAVGFSKGLWMECATHSTGITQCDIYSTLLGLPADIQAAQ) are extracellular. An intrachain disulfide couples C54 to C64. A helical membrane pass occupies residues 82–102 (AMMVTSSAISSLACIISVVGM). Over 103–116 (RCTVFCQESRAKDR) the chain is Cytoplasmic. A helical transmembrane segment spans residues 117-137 (VAVAGGVFFILGGLLGFIPVA). The Extracellular portion of the chain corresponds to 138 to 162 (WNLHGILRDFYSPLVPDSMKFEIGE). The chain crosses the membrane as a helical span at residues 163 to 183 (ALYLGIISSLFSLIAGIILCF). Topologically, residues 184–230 (SCSSQRNRSNYYDAYQAQPLATRSSPRPGQPPKVKSEFNSYSLTGYV) are cytoplasmic. A disordered region spans residues 205 to 230 (TRSSPRPGQPPKVKSEFNSYSLTGYV). K218 participates in a covalent cross-link: Glycyl lysine isopeptide (Lys-Gly) (interchain with G-Cter in SUMO). S219 and S223 each carry phosphoserine. Polar residues predominate over residues 220-230 (EFNSYSLTGYV). The segment at 229–230 (YV) is interactions with TJP1, TJP2 and TJP3.

This sequence belongs to the claudin family. In terms of assembly, can form homo- and heteropolymers with other claudins to mediate paracellular barrier and channel functions of tight junctions in response to physiological stimuli. Homopolymers interact with CLDN3, but not CLDN1, homopolymers. Directly interacts with TJP1/ZO-1, TJP2/ZO-2 and TJP3/ZO-3. The disulfide bond is necessary for pore formation, but is not required for correct protein trafficking.

It is found in the cell junction. It localises to the tight junction. The protein resides in the cell membrane. It catalyses the reaction Na(+)(in) = Na(+)(out). The enzyme catalyses K(+)(in) = K(+)(out). It carries out the reaction Rb(+)(in) = Rb(+)(out). The catalysed reaction is Li(+)(in) = Li(+)(out). It catalyses the reaction Cs(+)(in) = Cs(+)(out). The enzyme catalyses Ca(2+)(in) = Ca(2+)(out). It carries out the reaction methylamine(out) = methylamine(in). The catalysed reaction is choline(out) = choline(in). It catalyses the reaction H2O(in) = H2O(out). In terms of biological role, forms paracellular channels: polymerizes in tight junction strands with cation- and water-selective channels through the strands, conveying epithelial permeability in a process known as paracellular tight junction permeability. In intestinal epithelium, allows for sodium and water fluxes from the peritoneal side to the lumen of the intestine to regulate nutrient absorption and clear enteric pathogens as part of mucosal immune response. In kidney, allows passive sodium and calcium reabsorption across proximal tubules from the lumen back to the bloodstream. In the hepatobiliary tract, allows paracellular water and cation fluxes in the hepatic perivenous areas and biliary epithelium to generate bile flow and maintain osmotic gradients. The protein is Claudin-2 of Homo sapiens (Human).